A 79-amino-acid chain; its full sequence is Morintide mO2 (79 aa).

The first 20 residues, 1 to 20 (MAKLSFLSLFLLCLVATATA), serve as a signal peptide directing secretion. The Chitin-binding type-1 domain maps to 21–63 (QNCGRQAGNRACANGLCCSQYGFCGSTSEYCSRANGCQSNCRG). 4 disulfides stabilise this stretch: Cys23–Cys38, Cys32–Cys44, Cys37–Cys51, and Cys57–Cys61. The propeptide occupies 64–79 (GGGAGGAGGGAGGGSP).

In terms of tissue distribution, leaves (at protein level).

Its function is as follows. Chitin-binding protein which functions in defense against chitin-containing fungal pathogens. The protein is Morintide mO2 of Moringa oleifera (Horseradish tree).